Consider the following 159-residue polypeptide: Regulatory protein RecX (159 aa).

This sequence belongs to the RecX family.

Its subcellular location is the cytoplasm. Functionally, modulates RecA activity. This chain is Regulatory protein RecX, found in Chlorobium limicola (strain DSM 245 / NBRC 103803 / 6330).